A 97-amino-acid polypeptide reads, in one-letter code: Aspartyl/glutamyl-tRNA(Asn/Gln) amidotransferase subunit C (97 aa).

It belongs to the GatC family. As to quaternary structure, heterotrimer of A, B and C subunits.

It catalyses the reaction L-glutamyl-tRNA(Gln) + L-glutamine + ATP + H2O = L-glutaminyl-tRNA(Gln) + L-glutamate + ADP + phosphate + H(+). It carries out the reaction L-aspartyl-tRNA(Asn) + L-glutamine + ATP + H2O = L-asparaginyl-tRNA(Asn) + L-glutamate + ADP + phosphate + 2 H(+). In terms of biological role, allows the formation of correctly charged Asn-tRNA(Asn) or Gln-tRNA(Gln) through the transamidation of misacylated Asp-tRNA(Asn) or Glu-tRNA(Gln) in organisms which lack either or both of asparaginyl-tRNA or glutaminyl-tRNA synthetases. The reaction takes place in the presence of glutamine and ATP through an activated phospho-Asp-tRNA(Asn) or phospho-Glu-tRNA(Gln). This Synechococcus sp. (strain JA-2-3B'a(2-13)) (Cyanobacteria bacterium Yellowstone B-Prime) protein is Aspartyl/glutamyl-tRNA(Asn/Gln) amidotransferase subunit C.